We begin with the raw amino-acid sequence, 443 residues long: D-lactate dehydrogenase (443 aa).

Over 1–182 (MSWIDELSKI…GGKTIKNSSG (182 aa)) the chain is Extracellular. One can recognise an FAD-binding PCMH-type domain in the interval 32–209 (RAAENFVVVK…TKATIRLFPQ (178 aa)). Residues 183 to 203 (YSLLHLLVGSEGTLAVITKAT) traverse the membrane as a helical segment. Topologically, residues 204–383 (IRLFPQMRDM…WEKSYFEFRK (180 aa)) are cytoplasmic. The chain crosses the membrane as a helical span at residues 384 to 404 (SLLSLAVSLGGVISGEHGIGA). At 405–443 (VKLSELEELFPEQFELMRQIKLLFDPKNILNPGKVVRKL) the chain is on the extracellular side.

This sequence belongs to the FAD-binding oxidoreductase/transferase type 4 family. It depends on FAD as a cofactor. Zn(2+) serves as cofactor.

It localises to the cell membrane. The enzyme catalyses (R)-lactate + A = pyruvate + AH2. In terms of biological role, catalyzes the dehydrogenation of (R)-lactate (D-lactate) to pyruvate. Is likely involved in the utilization of D-lactate as a sole source for both carbon and electrons for dissimilatory sulfate reduction. Cannot use L-lactate as substrate, and NAD(+), horse cytochrome c, methylene blue or dimethylnaphthoquinone as acceptors. Active in vitro with artificial electron acceptors such as 2,6-dichlorophenolindophenol (DCPIP); the physiological acceptor is not known, but potential acceptors include cytochromes or quinones. This chain is D-lactate dehydrogenase, found in Archaeoglobus fulgidus (strain ATCC 49558 / DSM 4304 / JCM 9628 / NBRC 100126 / VC-16).